A 159-amino-acid chain; its full sequence is Cyclic pyranopterin monophosphate synthase (159 aa).

Substrate-binding positions include 75 to 77 (LCH) and 113 to 114 (ME). Residue D128 is part of the active site.

Belongs to the MoaC family. As to quaternary structure, homohexamer; trimer of dimers.

It carries out the reaction (8S)-3',8-cyclo-7,8-dihydroguanosine 5'-triphosphate = cyclic pyranopterin phosphate + diphosphate. It participates in cofactor biosynthesis; molybdopterin biosynthesis. In terms of biological role, catalyzes the conversion of (8S)-3',8-cyclo-7,8-dihydroguanosine 5'-triphosphate to cyclic pyranopterin monophosphate (cPMP). The chain is Cyclic pyranopterin monophosphate synthase from Vibrio vulnificus (strain YJ016).